The chain runs to 381 residues: MCTSLSELKCPVFSTKRKLLLEFALRTSVDMAAQEGVNYLSGLGLSRLICLPMALRAAIELNVFEIISQAGPDAQLSPSDIVAKIPTKNPSAAISLDRILRMLGASSILSVSTTKSGRVYGLNEESRCLVASEDKVSVVPMLLFTSDKAVVESFYNIKDVVLEEGVIPFDRTHGMDFFQYAGKEERVNKSFNQAMGAGSTIAFDEVFKVYKGFDNLKELVDVGGGIGTSLSNIVAKHPHIRGINFELPHVIGDAPDYPGVEHVPGDMFEGVPNAQNILLKWVLHDWDDDRSIKILKNCWKALPENGTVIVIEFVLPQVLGNNAESFNALTPDLLMMALNPGGKERTTIEFDGLAKAAGFAETKFFPISQGLHVMEFHKINC.

Positions 223, 246, 266, 267, and 280 each coordinate S-adenosyl-L-methionine. His-284 functions as the Proton acceptor in the catalytic mechanism.

Belongs to the class I-like SAM-binding methyltransferase superfamily. Cation-independent O-methyltransferase family. COMT subfamily.

The enzyme catalyses (S)-scoulerine + S-adenosyl-L-methionine = (S)-tetrahydrocolumbamine + S-adenosyl-L-homocysteine + H(+). Its function is as follows. Produces a precursor of protoberberine alkaloids. The protein is (S)-scoulerine 9-O-methyltransferase (SMT) of Coptis japonica (Japanese goldthread).